Here is a 338-residue protein sequence, read N- to C-terminus: 1-aminocyclopropane-1-carboxylate deaminase (338 aa).

Lysine 51 carries the post-translational modification N6-(pyridoxal phosphate)lysine. The Nucleophile role is filled by serine 78.

Belongs to the ACC deaminase/D-cysteine desulfhydrase family. As to quaternary structure, homotrimer. Pyridoxal 5'-phosphate is required as a cofactor.

The catalysed reaction is 1-aminocyclopropane-1-carboxylate + H2O = 2-oxobutanoate + NH4(+). Its function is as follows. Catalyzes a cyclopropane ring-opening reaction, the irreversible conversion of 1-aminocyclopropane-1-carboxylate (ACC) to ammonia and alpha-ketobutyrate. Allows growth on ACC as a nitrogen source. The protein is 1-aminocyclopropane-1-carboxylate deaminase of Burkholderia thailandensis (strain ATCC 700388 / DSM 13276 / CCUG 48851 / CIP 106301 / E264).